The sequence spans 530 residues: MEDDSLYLGGEWQFNHFSKLTSSRPDAAFAEIQRTSLPEKSPLSCETRVDLCDDLAPVARQLAPREKLPLSSRRPAAVGAGLQNMGNTCYVNASLQCLTYTPPLANYMLSREHSQTCHRHKGCMLCTMQAHITRALHNPGHVIQPSQALAAGFHRGKQEDAHEFLMFTVDAMKKACLPGHKQVDHHSKDTTLIHQIFGGYWRSQIKCLHCHGISDTFDPYLDIALDIQAAQSVQQALEQLVKPEELNGENAYHCGVCLQRAPASKTLTLHTSAKVLILVLKRFSDVTGNKIAKNVQYPECLDMQPYMSQPNTGPLVYVLYAVLVHAGWSCHNGHYFSYVKAQEGQWYKMDDAEVTASSITSVLSQQAYVLFYIQKSEWERHSESVSRGREPRALGAEDTDRRATQGELKRDHPCLQAPELDEHLVERATQESTLDHWKFLQEQNKTKPEFNVRKVEGTLPPDVLVIHQSKYKCGMKNHHPEQQSSLLNLSSTTPTHQESMNTGTLASLRGRARRSKGKNKHSKRALLVCQ.

In terms of domain architecture, USP spans 80 to 375; sequence AGLQNMGNTC…QAYVLFYIQK (296 aa). Cys-89 serves as the catalytic Nucleophile. The Proton acceptor role is filled by His-334. Composition is skewed to basic and acidic residues over residues 382-392 and 398-413; these read SESVSRGREPR and DTDR…RDHP. Disordered regions lie at residues 382–413 and 509–530; these read SESV…RDHP and RGRA…LVCQ. Residues 510–524 are compositionally biased toward basic residues; that stretch reads GRARRSKGKNKHSKR.

It belongs to the peptidase C19 family. USP17 subfamily.

The protein localises to the nucleus. It localises to the endoplasmic reticulum. The enzyme catalyses Thiol-dependent hydrolysis of ester, thioester, amide, peptide and isopeptide bonds formed by the C-terminal Gly of ubiquitin (a 76-residue protein attached to proteins as an intracellular targeting signal).. Functionally, deubiquitinating enzyme that removes conjugated ubiquitin from specific proteins to regulate different cellular processes that may include cell proliferation, progression through the cell cycle, apoptosis, cell migration, and the cellular response to viral infection. The protein is Ubiquitin carboxyl-terminal hydrolase 17-like protein 20 (USP17L20) of Homo sapiens (Human).